A 326-amino-acid chain; its full sequence is JNK1/MAPK8-associated membrane protein homolog (326 aa).

The Lumenal portion of the chain corresponds to Met1–Pro71. Asn27 carries N-linked (GlcNAc...) asparagine glycosylation. A helical transmembrane segment spans residues Tyr72 to Ile92. Topologically, residues Arg93–Glu108 are cytoplasmic. The chain crosses the membrane as a helical span at residues Tyr109–Pro129. Residues Arg130 to Glu166 lie on the Lumenal side of the membrane. The chain crosses the membrane as a helical span at residues Val167–Leu187. The Cytoplasmic portion of the chain corresponds to Val188–Tyr208. The next 2 helical transmembrane spans lie at Ala209–Phe229 and Tyr230–Leu250. Residues Glu251–His269 lie on the Cytoplasmic side of the membrane. Residues Leu270–Pro290 form a helical membrane-spanning segment. Residues Leu291 to Arg296 are Lumenal-facing. The chain crosses the membrane as a helical span at residues Trp297–Ser317. The Cytoplasmic portion of the chain corresponds to Asn318–Ser326.

It localises to the endoplasmic reticulum membrane. Facilitates degradation of misfolded endoplasmic reticulum (ER) proteins through the recruitment of components of the proteasome and endoplasmic reticulum-associated degradation (ERAD) system. Involved in ER stress response. This Caenorhabditis elegans protein is JNK1/MAPK8-associated membrane protein homolog.